The primary structure comprises 372 residues: Sesquiterpene synthase Agr9 (372 aa).

Mg(2+) contacts are provided by aspartate 87, asparagine 225, serine 229, and glutamate 233. A DDXXD motif motif is present at residues 87-91 (DEYTD). (2E,6E)-farnesyl diphosphate-binding residues include arginine 314 and tyrosine 315.

The protein belongs to the terpene synthase family. The cofactor is Mg(2+).

It catalyses the reaction (2E,6E)-farnesyl diphosphate = gamma-muurolene + diphosphate. The catalysed reaction is (2E,6E)-farnesyl diphosphate = delta-cadinene + diphosphate. Terpene cyclase that catalyzes the cyclization of farnesyl diphosphate (FPP) to various sesquiterpenes, including gamma-muurolene, beta-cadinene and delta-cadinene. The chain is Sesquiterpene synthase Agr9 from Cyclocybe aegerita (Black poplar mushroom).